A 162-amino-acid polypeptide reads, in one-letter code: MPSFDIVSELELFEVNHAVQNTQKEIATRFDFRGHDVSIELNEKNKEIKISTESDFQCEQVYNMLENHFYKRKIDVQALDPQKATASGKNFVQVIKLKDGLDSDTAKKINKAIKESGIKVQSSIQGDKIRVTDKKRDTLQQVMAFLREQQFGLPLQFNNFKD.

The protein belongs to the YajQ family.

Its function is as follows. Nucleotide-binding protein. The sequence is that of Nucleotide-binding protein ABSDF0503 from Acinetobacter baumannii (strain SDF).